The sequence spans 281 residues: Apolipoprotein E (281 aa).

Residues 1–18 (MKVLWAALLIALLAGCQG) form the signal peptide. Repeat copies occupy residues 82–103 (ALMD…EQLS), 104–125 (PVAE…ARLG), 126–147 (ADME…AMLG), 148–169 (QSTD…TVSY), and 198–219 (TRME…EQVE). The interval 82–219 (ALMDETMKEL…RLDEVKEQVE (138 aa)) is 5 X 22 AA approximate tandem repeats. Met-145 is modified (methionine sulfoxide). Position 149 is a phosphoserine (Ser-149). The segment at 160-170 (HLRKLRTVSYT) is LDL and other lipoprotein receptors binding. Heparin-binding positions include 164–167 (LRTV) and 193–200 (GERLRTRM). Residues 230-281 (QQMRLQAEAFQARLKSWFEPLVEDMQRQWAGLVEKVQAAVGASAAPVPSDNH) form a homooligomerization region. The tract at residues 242 to 254 (RLKSWFEPLVEDM) is specificity for association with VLDL.

This sequence belongs to the apolipoprotein A1/A4/E family. In terms of assembly, homotetramer. May interact with ABCA1; functionally associated with ABCA1 in the biogenesis of HDLs. May interact with APP/A4 amyloid-beta peptide; the interaction is extremely stable in vitro but its physiological significance is unclear. May interact with MAPT. May interact with MAP2. In the cerebrospinal fluid, interacts with secreted SORL1. Interacts with PMEL; this allows the loading of PMEL luminal fragment on ILVs to induce fibril nucleation. In terms of processing, APOE exists as multiple glycosylated and sialylated glycoforms within cells and in plasma. The extent of glycosylation and sialylation are tissue and context specific. Glycated in plasma VLDL. Post-translationally, phosphorylated by FAM20C in the extracellular medium.

It is found in the secreted. The protein localises to the extracellular space. Its subcellular location is the extracellular matrix. The protein resides in the extracellular vesicle. It localises to the endosome. It is found in the multivesicular body. Functionally, APOE is an apolipoprotein, a protein associating with lipid particles, that mainly functions in lipoprotein-mediated lipid transport between organs via the plasma and interstitial fluids. APOE is a core component of plasma lipoproteins and is involved in their production, conversion and clearance. Apolipoproteins are amphipathic molecules that interact both with lipids of the lipoprotein particle core and the aqueous environment of the plasma. As such, APOE associates with chylomicrons, chylomicron remnants, very low density lipoproteins (VLDL) and intermediate density lipoproteins (IDL) but shows a preferential binding to high-density lipoproteins (HDL). It also binds a wide range of cellular receptors including the LDL receptor/LDLR, the LDL receptor-related proteins LRP1, LRP2 and LRP8 and the very low-density lipoprotein receptor/VLDLR that mediate the cellular uptake of the APOE-containing lipoprotein particles. Finally, APOE also has a heparin-binding activity and binds heparan-sulfate proteoglycans on the surface of cells, a property that supports the capture and the receptor-mediated uptake of APOE-containing lipoproteins by cells. A main function of APOE is to mediate lipoprotein clearance through the uptake of chylomicrons, VLDLs, and HDLs by hepatocytes. APOE is also involved in the biosynthesis by the liver of VLDLs as well as their uptake by peripheral tissues ensuring the delivery of triglycerides and energy storage in muscle, heart and adipose tissues. By participating in the lipoprotein-mediated distribution of lipids among tissues, APOE plays a critical role in plasma and tissues lipid homeostasis. APOE is also involved in two steps of reverse cholesterol transport, the HDLs-mediated transport of cholesterol from peripheral tissues to the liver, and thereby plays an important role in cholesterol homeostasis. First, it is functionally associated with ABCA1 in the biogenesis of HDLs in tissues. Second, it is enriched in circulating HDLs and mediates their uptake by hepatocytes. APOE also plays an important role in lipid transport in the central nervous system, regulating neuron survival and sprouting. This Aotus nancymaae (Ma's night monkey) protein is Apolipoprotein E (APOE).